The primary structure comprises 371 residues: Putative transport protein YtvI (371 aa).

Helical transmembrane passes span 6-26 (ITIF…IAAA), 30-50 (FPLT…HPVV), 65-85 (VLGV…ILVA), 168-188 (FFAL…ATFF), 225-245 (GFIK…FIGL), 256-276 (IAFL…SVFV), 283-303 (SITG…VVLI), 312-332 (ILSK…FAGF), and 334-354 (LFGF…QAFI).

It belongs to the autoinducer-2 exporter (AI-2E) (TC 2.A.86) family.

It is found in the cell membrane. In Bacillus subtilis (strain 168), this protein is Putative transport protein YtvI (ytvI).